The following is a 591-amino-acid chain: L-fucose isomerase (591 aa).

Active-site proton acceptor residues include Glu337 and Asp361. Glu337, Asp361, and His528 together coordinate Mn(2+).

Belongs to the L-fucose isomerase family. As to quaternary structure, homohexamer. Mn(2+) serves as cofactor.

The protein localises to the cytoplasm. It catalyses the reaction L-fucose = L-fuculose. The enzyme catalyses D-arabinose = D-ribulose. It carries out the reaction L-xylopyranose = L-xylulose. It participates in carbohydrate degradation; L-fucose degradation; L-lactaldehyde and glycerone phosphate from L-fucose: step 1/3. Inhibited by ribitol, L-arabitol and dulcitol. Isomerization of L-xylulose to L-xylose is inhibited by xylitol. Converts the aldose L-fucose into the corresponding ketose L-fuculose. Also converts D-arabinose into D-ribulose. In addition, catalyzes the isomerization of L-xylulose to L-xylose. The polypeptide is L-fucose isomerase (Escherichia coli (strain K12)).